We begin with the raw amino-acid sequence, 413 residues long: Chloramphenicol efflux pump MT0201 (413 aa).

12 helical membrane passes run 23-43 (LSVL…PVGA), 55-75 (VVLV…TTVP), 89-109 (LVVS…APNF), 110-130 (AVLA…WAVI), 150-170 (IYIG…AMSL), 176-196 (LAAV…RLAL), 226-246 (VLTM…VVII), 256-276 (NLAW…PLVA), 286-306 (AVIV…ALAF), 312-332 (AATA…ATAV), 353-373 (GLYV…GGLL), and 378-398 (LAMM…GMTV).

Belongs to the major facilitator superfamily.

It is found in the cell membrane. Active efflux pump that plays an important role in chloramphenicol resistance. This chain is Chloramphenicol efflux pump MT0201, found in Mycobacterium tuberculosis (strain CDC 1551 / Oshkosh).